Here is a 117-residue protein sequence, read N- to C-terminus: Small ribosomal subunit protein uS12c (117 aa).

The disordered stretch occupies residues 9 to 40 (RNARQPIENRKKSPALRGCPQRRGTITPKKPN).

This sequence belongs to the universal ribosomal protein uS12 family. In terms of assembly, part of the 30S ribosomal subunit.

The protein resides in the plastid. It is found in the chloroplast. Its function is as follows. With S4 and S5 plays an important role in translational accuracy. Located at the interface of the 30S and 50S subunits. This Pinus koraiensis (Korean pine) protein is Small ribosomal subunit protein uS12c (rps12).